Here is a 436-residue protein sequence, read N- to C-terminus: 3-ketoacyl-CoA thiolase (436 aa).

The active-site Acyl-thioester intermediate is the Cys-99. Residues His-392 and Cys-422 each act as proton acceptor in the active site.

It belongs to the thiolase-like superfamily. Thiolase family. As to quaternary structure, heterotetramer of two alpha chains (FadJ) and two beta chains (FadI).

It localises to the cytoplasm. It catalyses the reaction an acyl-CoA + acetyl-CoA = a 3-oxoacyl-CoA + CoA. It participates in lipid metabolism; fatty acid beta-oxidation. In terms of biological role, catalyzes the final step of fatty acid oxidation in which acetyl-CoA is released and the CoA ester of a fatty acid two carbons shorter is formed. In Shigella boydii serotype 4 (strain Sb227), this protein is 3-ketoacyl-CoA thiolase.